Here is a 515-residue protein sequence, read N- to C-terminus: uncharacterized protein (515 aa).

3 helical membrane-spanning segments follow: residues 1-21 (MSFV…LAGI), 165-185 (IGGP…GLLF), and 199-219 (GPVG…GLFG). The region spanning 1-93 (MSFVVAAPEV…AGAYAGAEAA (93 aa)) is the PE domain. The segment covering 349–360 (GGTLIGNGGDGG) has biased composition (gly residues). 2 disordered regions span residues 349-368 (GGTL…TDGF) and 463-515 (GVSG…SPGG).

Belongs to the mycobacterial PE family. PGRS subfamily.

It is found in the cell membrane. This is an uncharacterized protein from Mycobacterium tuberculosis (strain CDC 1551 / Oshkosh).